A 356-amino-acid polypeptide reads, in one-letter code: Peptide chain release factor 1 (356 aa).

Residue Q233 is modified to N5-methylglutamine.

The protein belongs to the prokaryotic/mitochondrial release factor family. Methylated by PrmC. Methylation increases the termination efficiency of RF1.

It localises to the cytoplasm. Its function is as follows. Peptide chain release factor 1 directs the termination of translation in response to the peptide chain termination codons UAG and UAA. This chain is Peptide chain release factor 1, found in Bacillus licheniformis (strain ATCC 14580 / DSM 13 / JCM 2505 / CCUG 7422 / NBRC 12200 / NCIMB 9375 / NCTC 10341 / NRRL NRS-1264 / Gibson 46).